Consider the following 147-residue polypeptide: Deoxyuridine 5'-triphosphate nucleotidohydrolase (147 aa).

R24 is a binding site for Mg(2+). Residues 68–70 (PRS), 82–85 (GVID), Y88, G93, I95, and R111 contribute to the dUTP site.

Belongs to the dUTPase family. The cofactor is Mg(2+).

It catalyses the reaction dUTP + H2O = dUMP + diphosphate + H(+). In terms of biological role, this enzyme is involved in nucleotide metabolism: it produces dUMP, the immediate precursor of thymidine nucleotides and it decreases the intracellular concentration of dUTP so that uracil cannot be incorporated into DNA. The chain is Deoxyuridine 5'-triphosphate nucleotidohydrolase (OPG046) from Oryctolagus cuniculus (Rabbit).